A 698-amino-acid chain; its full sequence is Elongation factor G (698 aa).

A tr-type G domain is found at glutamate 8–threonine 290. Residues alanine 17–threonine 24, aspartate 88–histidine 92, and asparagine 142–aspartate 145 each bind GTP.

The protein belongs to the TRAFAC class translation factor GTPase superfamily. Classic translation factor GTPase family. EF-G/EF-2 subfamily.

Its subcellular location is the cytoplasm. Its function is as follows. Catalyzes the GTP-dependent ribosomal translocation step during translation elongation. During this step, the ribosome changes from the pre-translocational (PRE) to the post-translocational (POST) state as the newly formed A-site-bound peptidyl-tRNA and P-site-bound deacylated tRNA move to the P and E sites, respectively. Catalyzes the coordinated movement of the two tRNA molecules, the mRNA and conformational changes in the ribosome. This Chromobacterium violaceum (strain ATCC 12472 / DSM 30191 / JCM 1249 / CCUG 213 / NBRC 12614 / NCIMB 9131 / NCTC 9757 / MK) protein is Elongation factor G.